A 582-amino-acid polypeptide reads, in one-letter code: Bifunctional lycopene cyclase/phytoene synthase (582 aa).

A lycopene beta-cyclase region spans residues 1–261 (MNQNGTRLCY…VVLGLVGCDY (261 aa)). Transmembrane regions (helical) follow at residues 34 to 54 (CTYTIPAASALTVLYYPFFTA), 59 to 79 (KICILITIAILATLPWDSYLI), 99 to 121 (IPIEEVFFFAIQTYITSLTYCIF), 142 to 162 (YVVATVILALMGGGTACLLLG), 170 to 190 (LILVWACPILLFQWMMSYPFL), and 242 to 262 (ALFFLVSNMMVVLGLVGCDYA). The interval 268-582 (YESLSQPASD…LLSALVYRLE (315 aa)) is phytoene synthase.

In the N-terminal section; belongs to the lycopene beta-cyclase family. It in the C-terminal section; belongs to the phytoene/squalene synthase family.

The protein resides in the membrane. It catalyses the reaction all-trans-lycopene = gamma-carotene. The catalysed reaction is gamma-carotene = all-trans-beta-carotene. It carries out the reaction 2 (2E,6E,10E)-geranylgeranyl diphosphate = 15-cis-phytoene + 2 diphosphate. Its pathway is carotenoid biosynthesis; beta-carotene biosynthesis. It functions in the pathway carotenoid biosynthesis; phytoene biosynthesis; all-trans-phytoene from geranylgeranyl diphosphate: step 1/1. Its function is as follows. Bifunctional enzyme that catalyzes the reactions from geranylgeranyl diphosphate to phytoene (phytoene synthase) and lycopene to beta-carotene via the intermediate gamma-carotene (lycopene cyclase). The polypeptide is Bifunctional lycopene cyclase/phytoene synthase (Aspergillus niger (strain ATCC MYA-4892 / CBS 513.88 / FGSC A1513)).